The following is a 670-amino-acid chain: uncharacterized protein (670 aa).

The next 10 membrane-spanning stretches (helical) occupy residues 23–42 (YALR…YYLN), 47–69 (YWAM…SKSL), 76–98 (LLGA…FFLL), 118–140 (VAYA…VNIT), 153–170 (VCEV…MMIL), 381–403 (QWDA…SAVA), 410–432 (SLLM…GLMV), 437–454 (LWQF…MQLL), 461–483 (FAAL…NPPV), and 493–510 (NLAK…FAIL).

This sequence belongs to the aromatic acid exporter ArAE (TC 2.A.85) family.

It is found in the cell membrane. This is an uncharacterized protein from Escherichia coli O157:H7.